The primary structure comprises 276 residues: Digeranylgeranylglyceryl phosphate synthase (276 aa).

Transmembrane regions (helical) follow at residues 12 to 34, 38 to 60, 84 to 104, 107 to 127, 146 to 166, 202 to 222, 224 to 244, and 256 to 276; these read PHNC…GSVP, ILIL…NDYF, ALWY…LISL, FAFA…LKPL, GAIA…AFLV, VAAF…KAGV, VGYY…YLIL, and QLLL…AALM.

This sequence belongs to the UbiA prenyltransferase family. DGGGP synthase subfamily. Mg(2+) is required as a cofactor.

Its subcellular location is the cell membrane. The catalysed reaction is sn-3-O-(geranylgeranyl)glycerol 1-phosphate + (2E,6E,10E)-geranylgeranyl diphosphate = 2,3-bis-O-(geranylgeranyl)-sn-glycerol 1-phosphate + diphosphate. It participates in membrane lipid metabolism; glycerophospholipid metabolism. Prenyltransferase that catalyzes the transfer of the geranylgeranyl moiety of geranylgeranyl diphosphate (GGPP) to the C2 hydroxyl of (S)-3-O-geranylgeranylglyceryl phosphate (GGGP). This reaction is the second ether-bond-formation step in the biosynthesis of archaeal membrane lipids. The chain is Digeranylgeranylglyceryl phosphate synthase from Thermococcus gammatolerans (strain DSM 15229 / JCM 11827 / EJ3).